The following is a 147-amino-acid chain: Cytochrome c-type biogenesis protein CcmE (147 aa).

Over 1 to 7 the chain is Cytoplasmic; the sequence is MTVRQRR. The helical; Signal-anchor for type II membrane protein transmembrane segment at 8-28 threads the bilayer; sequence FAMVILVVIGVSIATGLGLKA. At 29–147 the chain is on the periplasmic side; it reads FQENILFFYN…KTKANTEDKL (119 aa). 2 residues coordinate heme: His123 and Tyr127.

The protein belongs to the CcmE/CycJ family.

It localises to the cell inner membrane. Heme chaperone required for the biogenesis of c-type cytochromes. Transiently binds heme delivered by CcmC and transfers the heme to apo-cytochromes in a process facilitated by CcmF and CcmH. This is Cytochrome c-type biogenesis protein CcmE from Nitrosococcus oceani (strain ATCC 19707 / BCRC 17464 / JCM 30415 / NCIMB 11848 / C-107).